Here is a 250-residue protein sequence, read N- to C-terminus: Pyrroloquinoline-quinone synthase (250 aa).

This sequence belongs to the PqqC family.

It catalyses the reaction 6-(2-amino-2-carboxyethyl)-7,8-dioxo-1,2,3,4,7,8-hexahydroquinoline-2,4-dicarboxylate + 3 O2 = pyrroloquinoline quinone + 2 H2O2 + 2 H2O + H(+). It participates in cofactor biosynthesis; pyrroloquinoline quinone biosynthesis. In terms of biological role, ring cyclization and eight-electron oxidation of 3a-(2-amino-2-carboxyethyl)-4,5-dioxo-4,5,6,7,8,9-hexahydroquinoline-7,9-dicarboxylic-acid to PQQ. The chain is Pyrroloquinoline-quinone synthase from Xanthomonas campestris pv. campestris (strain 8004).